Consider the following 505-residue polypeptide: Lysine--tRNA ligase (505 aa).

Positions 409 and 416 each coordinate Mg(2+).

It belongs to the class-II aminoacyl-tRNA synthetase family. In terms of assembly, homodimer. It depends on Mg(2+) as a cofactor.

The protein resides in the cytoplasm. The enzyme catalyses tRNA(Lys) + L-lysine + ATP = L-lysyl-tRNA(Lys) + AMP + diphosphate. The protein is Lysine--tRNA ligase of Latilactobacillus sakei subsp. sakei (strain 23K) (Lactobacillus sakei subsp. sakei).